The sequence spans 1484 residues: MSLSALLNNDDPVEDTKLYLESLNREMDRLIKRDQLELMYQDWKFANYQEFELISEWNTQCKELVGDGNDLQNNDLMTEEVHLDDLYDNIQRIRNEWKDYESYKETRSQLLSKSIQAKPIKHRRRRRTKLEMEAAANLAALSQMGTTDVKTPEIINDHGNRSKASRSDTTNKTDNTMAGINSPTSDVDSGHKDELDQTKLIKKQEASSSTNSAASVTASVANGIVEDQKDEAERTIEANRIGSNMQNSDQDTMDDLKKTNDPSSDIDSDANTSVNDGSDENLSNKLDSDDLHSEPADNEEEPVSSDAEKDQAENINQTDESEEEIIVKEYDDNNDEDFAPEIKKPKPNGKIVTINSDRPKIVRELIKLRNKGKAPKSSKRRYTAVNITEYSPTEKKISVKITLKQMHVKKLKKILQDARKAEEKRLQEEAKQIADQESPRKRRKIDRSENTKQEDEDDKEDDDLDGLPTYGMKMSLKDAKAIQRHYDNTYTMIWKDMARKDCMKISRLVQQIQSTRALNYKKTSSLCAREARKWQTRNFKQVKDFQTRARKGIREMANFWKKNEREERDLKKKAEREALELAKKEEEEKESKRQAKKLNFLLTQTELYSHFIGRKIKTSALEGNEVAEEDEDNYDLTTTAPNKNDFHAIDFDNENDEQLKLKAAQNASNALAETRAKAKAFDDAHRQQQSTESDDEEEMNFQNPTSLGEITIEQPKMLACTLKEYQLKGLNWLANLYDQGINGILADEMGLGKTVQSISVLAHLAEHHNIWGPFLVVTPASTLHNWVNEISKFVPQFKILPYWGSANDRKVLRKFWDRKNLRYSEKSPFHVMITSYQMVVADASYLQKMKWQYMILDEAQAIKSSQSSRWKNLLSFHCRNRLLLTGTPIQNNMQELWALLHFIMPSLFDSHDEFNEWFSRDIESHAEGNSSLNQQQLRRLHMILKPFMLRRIKKNVQSELGDKIEIDVMCDLTQRQTKLYQVLKSQMSSNYDAIENAAAEGSDIAGGGNSDQSIINAVMQFRKVCNHPDLFERADINSPFSFTSFGKTSSLISSSIATSGGLTETISELMYSSTNPINCAIPKLIYEDLILPNYNNSIDIMEKLLLSDFSIYDPVNNKEMCQYLGLLTGLAYGSFRKIHKSNYFERIINLKKESKQSSQNLITVVSNANDLIADSIVHADTNLPNLTGIRNDIYHNDYLNSIQPGYCPKVVAPPINFNVNGSLNFTNKMSSYLFNPVITTALSSIPPPTQYNMFVKKCIPIEEFPISEMYPNPLNKHFSSNISMPSMDRFITESAKLKKLDELLVELKKNDHRVLIYFQMTKMMDLMEEYLTYRQYNHIRLDGSSKLEDRRDLVHDWQTNPEIFIFLLSTRAGGLGINLTAADTVIFYDSDWNPTIDSQAMDRAHRLGQTKQVTVYRLLVRGTIEERMRDRAKQKEQVQQVVMEGKTKDTNIQTTHTRPEHEQLTPKSLSSEPEATNNLITVKN.

3 disordered regions span residues 149 to 193, 237 to 353, and 426 to 466; these read VKTP…GHKD, EANR…KIVT, and LQEE…DLDG. The span at 155–171 shows a compositional bias: basic and acidic residues; the sequence is INDHGNRSKASRSDTTN. Polar residues-rich tracts occupy residues 172-187, 241-250, and 261-285; these read KTDN…TSDV, IGSNMQNSDQ, and DPSS…LSNK. Basic and acidic residues-rich tracts occupy residues 286–295 and 426–439; these read LDSDDLHSEP and LQEE…QESP. Positions 404-462 form a coiled coil; that stretch reads KQMHVKKLKKILQDARKAEEKRLQEEAKQIADQESPRKRRKIDRSENTKQEDEDDKEDD. Over residues 454–465 the composition is skewed to acidic residues; the sequence is EDEDDKEDDDLD. The DBINO domain occupies 493-618; the sequence is IWKDMARKDC…SHFIGRKIKT (126 aa). Residues 673 to 702 form a disordered region; it reads ETRAKAKAFDDAHRQQQSTESDDEEEMNFQ. The segment covering 674 to 686 has biased composition (basic and acidic residues); it reads TRAKAKAFDDAHR. Positions 734–906 constitute a Helicase ATP-binding domain; it reads ANLYDQGING…WALLHFIMPS (173 aa). 747–754 contacts ATP; that stretch reads DEMGLGKT. A DEAQ box motif is present at residues 857 to 860; that stretch reads DEAQ. The region spanning 1299 to 1463 is the Helicase C-terminal domain; sequence KLDELLVELK…TTHTRPEHEQ (165 aa). Residues 1446 to 1484 are disordered; it reads KTKDTNIQTTHTRPEHEQLTPKSLSSEPEATNNLITVKN. Residues 1465-1484 are compositionally biased toward polar residues; that stretch reads TPKSLSSEPEATNNLITVKN.

The protein belongs to the SNF2/RAD54 helicase family. In terms of assembly, component of the INO80 chromatin-remodeling complex.

The protein localises to the nucleus. It catalyses the reaction ATP + H2O = ADP + phosphate + H(+). In terms of biological role, ATPase component of the INO80 complex which remodels chromatin by shifting nucleosomes and is involved in DNA repair. The sequence is that of Chromatin-remodeling ATPase INO80 (INO80) from Candida glabrata (strain ATCC 2001 / BCRC 20586 / JCM 3761 / NBRC 0622 / NRRL Y-65 / CBS 138) (Yeast).